We begin with the raw amino-acid sequence, 313 residues long: Beta-lactamase BRO-1 (313 aa).

The first 25 residues, 1–25 (MQRRHFLQKTLLALPIIFSGNLLTG), serve as a signal peptide directing secretion. Residue cysteine 26 is the site of N-palmitoyl cysteine attachment. Cysteine 26 carries the S-diacylglycerol cysteine lipid modification. The active-site Acyl-ester intermediate is the serine 90. A substrate-binding site is contributed by 255–257 (KTG).

It belongs to the class-A beta-lactamase family.

It localises to the cell membrane. It catalyses the reaction a beta-lactam + H2O = a substituted beta-amino acid. The sequence is that of Beta-lactamase BRO-1 (bla) from Moraxella catarrhalis (Branhamella catarrhalis).